The following is a 569-amino-acid chain: Arylsulfatase I (569 aa).

An N-terminal signal peptide occupies residues 1–23 (MHTLTGFSLVSLLSFGYLSWDWA). Residues D55, D56, and C93 each coordinate Ca(2+). C93 serves as the catalytic Nucleophile. A 3-oxoalanine (Cys) modification is found at C93. Position 147 (K147) interacts with substrate. H149 is an active-site residue. H239 contacts substrate. 2 N-linked (GlcNAc...) asparagine glycosylation sites follow: N276 and N288. 2 residues coordinate Ca(2+): D297 and N298. K315 serves as a coordination point for substrate. N-linked (GlcNAc...) asparagine glycosylation is found at N466 and N496. The tract at residues 510-539 (RAHPDFNGGAWGPWASDEEEEEEEGRARSF) is disordered.

The protein belongs to the sulfatase family. Ca(2+) serves as cofactor. Post-translationally, the oxidation of Cys-93 residue to 3-oxoalanine (also known as C(alpha)-formylglycine) by SUMF1/Sulfatase-modifying factor 1, seems critical for catalytic activity. As to expression, expressed in placenta, in embryonic stem cells, fetal eyes and lens.

It localises to the secreted. It is found in the endoplasmic reticulum. Functionally, displays arylsulfatase activity at neutral pH, when co-expressed with SUMF1; arylsulfatase activity is measured in the secretion medium of retinal cell line, but no activity is recorded when measured in cell extracts. Lacks arylsulfatase activity. The polypeptide is Arylsulfatase I (ARSI) (Homo sapiens (Human)).